Here is a 360-residue protein sequence, read N- to C-terminus: Phospho-N-acetylmuramoyl-pentapeptide-transferase (360 aa).

10 consecutive transmembrane segments (helical) span residues 26–46, 74–94, 97–117, 132–152, 168–188, 199–219, 236–256, 263–283, 288–308, and 338–358; these read AILA…KLIE, MGGL…GDLG, YVWV…IDDY, WKYI…FYST, ILPQ…VGAS, GLAI…AYLS, SGEL…FLWF, VFMG…IAVL, ILLV…ILQV, and VIVR…ATLK.

This sequence belongs to the glycosyltransferase 4 family. MraY subfamily. Mg(2+) is required as a cofactor.

Its subcellular location is the cell inner membrane. The catalysed reaction is UDP-N-acetyl-alpha-D-muramoyl-L-alanyl-gamma-D-glutamyl-meso-2,6-diaminopimeloyl-D-alanyl-D-alanine + di-trans,octa-cis-undecaprenyl phosphate = di-trans,octa-cis-undecaprenyl diphospho-N-acetyl-alpha-D-muramoyl-L-alanyl-D-glutamyl-meso-2,6-diaminopimeloyl-D-alanyl-D-alanine + UMP. It functions in the pathway cell wall biogenesis; peptidoglycan biosynthesis. Its function is as follows. Catalyzes the initial step of the lipid cycle reactions in the biosynthesis of the cell wall peptidoglycan: transfers peptidoglycan precursor phospho-MurNAc-pentapeptide from UDP-MurNAc-pentapeptide onto the lipid carrier undecaprenyl phosphate, yielding undecaprenyl-pyrophosphoryl-MurNAc-pentapeptide, known as lipid I. The protein is Phospho-N-acetylmuramoyl-pentapeptide-transferase of Shewanella amazonensis (strain ATCC BAA-1098 / SB2B).